The sequence spans 93 residues: Large ribosomal subunit protein uL23cz/uL23cy (93 aa).

It belongs to the universal ribosomal protein uL23 family. As to quaternary structure, part of the 50S ribosomal subunit.

Its subcellular location is the plastid. The protein localises to the chloroplast. In terms of biological role, binds to 23S rRNA. This chain is Large ribosomal subunit protein uL23cz/uL23cy (rpl23-A), found in Panax ginseng (Korean ginseng).